The primary structure comprises 243 residues: Small ribosomal subunit protein eS4 (243 aa).

Residues 43 to 105 (IPLLYIVRDY…TGEHYRVLPN (63 aa)) form the S4 RNA-binding domain.

This sequence belongs to the eukaryotic ribosomal protein eS4 family.

The protein is Small ribosomal subunit protein eS4 (rps4e) of Pyrococcus horikoshii (strain ATCC 700860 / DSM 12428 / JCM 9974 / NBRC 100139 / OT-3).